The sequence spans 434 residues: Enolase (434 aa).

Substrate is bound by residues histidine 158 and glutamate 167. The Proton donor role is filled by glutamate 210. Mg(2+)-binding residues include aspartate 245, glutamate 294, and aspartate 319. Substrate-binding residues include glutamate 294 and aspartate 319. Lysine 344 serves as the catalytic Proton acceptor. Residues 371–374 (SHRS) and lysine 395 each bind substrate.

The protein belongs to the enolase family. As to quaternary structure, homodimer. Requires Mg(2+) as cofactor.

Its subcellular location is the cytoplasm. The enzyme catalyses (2R)-2-phosphoglycerate = phosphoenolpyruvate + H2O. It participates in carbohydrate degradation; glycolysis; pyruvate from D-glyceraldehyde 3-phosphate: step 4/5. This Caenorhabditis elegans protein is Enolase.